The primary structure comprises 112 residues: Putative pterin-4-alpha-carbinolamine dehydratase (112 aa).

This sequence belongs to the pterin-4-alpha-carbinolamine dehydratase family.

The catalysed reaction is (4aS,6R)-4a-hydroxy-L-erythro-5,6,7,8-tetrahydrobiopterin = (6R)-L-erythro-6,7-dihydrobiopterin + H2O. This chain is Putative pterin-4-alpha-carbinolamine dehydratase, found in Shewanella halifaxensis (strain HAW-EB4).